Consider the following 675-residue polypeptide: Potassium-transporting ATPase ATP-binding subunit 2 (675 aa).

4 consecutive transmembrane segments (helical) span residues 34 to 54 (IMFVVEVGMVLTLILICFPDI), 65 to 85 (LITIFIILLITILFANFSEAF), 216 to 236 (IALFTLLTTLTIIFLVVIVTL), and 245 to 265 (LILPIAMLIALTVCLIPTTIG). Asp304 (4-aspartylphosphate intermediate) is an active-site residue. Residues Asp341, Glu345, 372–379 (FTAETRMS), and Lys390 contribute to the ATP site. Residues Asp513 and Asp517 each coordinate Mg(2+). 3 helical membrane passes run 569–591 (ALTTFSLANDVAKYFAILPALMM), 611–631 (AIISALIFNALIIVALIPIAM), and 644–664 (IFINNMLIYGLGGLIVPFLGI).

Belongs to the cation transport ATPase (P-type) (TC 3.A.3) family. Type IA subfamily. The system is composed of three essential subunits: KdpA, KdpB and KdpC.

Its subcellular location is the cell membrane. The catalysed reaction is K(+)(out) + ATP + H2O = K(+)(in) + ADP + phosphate + H(+). Part of the high-affinity ATP-driven potassium transport (or Kdp) system, which catalyzes the hydrolysis of ATP coupled with the electrogenic transport of potassium into the cytoplasm. This subunit is responsible for energy coupling to the transport system and for the release of the potassium ions to the cytoplasm. In Staphylococcus aureus (strain Mu50 / ATCC 700699), this protein is Potassium-transporting ATPase ATP-binding subunit 2.